Consider the following 314-residue polypeptide: Malate dehydrogenase (314 aa).

Residues 7–13 (GAAGGIG) and Asp-34 each bind NAD(+). Substrate contacts are provided by Arg-81 and Arg-87. Residues Asn-94 and 117 to 119 (ITN) each bind NAD(+). Positions 119 and 153 each coordinate substrate. His-177 (proton acceptor) is an active-site residue. Met-230 provides a ligand contact to NAD(+).

Belongs to the LDH/MDH superfamily. MDH type 1 family. As to quaternary structure, homodimer.

It catalyses the reaction (S)-malate + NAD(+) = oxaloacetate + NADH + H(+). In terms of biological role, catalyzes the reversible oxidation of malate to oxaloacetate. This chain is Malate dehydrogenase, found in Glaesserella parasuis serovar 5 (strain SH0165) (Haemophilus parasuis).